The following is a 218-amino-acid chain: Fibroblast growth factor 15 (218 aa).

A signal peptide spans Met-1 to Gly-25.

The protein belongs to the heparin-binding growth factors family. Interacts with MALRD1. As to expression, expressed in the developing brain.

It localises to the secreted. Its function is as follows. Involved in the suppression of bile acid biosynthesis through down-regulation of CYP7A1 expression. In Mus musculus (Mouse), this protein is Fibroblast growth factor 15 (Fgf15).